Here is a 374-residue protein sequence, read N- to C-terminus: Peptide chain release factor 2 (374 aa).

An N5-methylglutamine modification is found at Gln249.

Belongs to the prokaryotic/mitochondrial release factor family. Post-translationally, methylated by PrmC. Methylation increases the termination efficiency of RF2.

The protein resides in the cytoplasm. Its function is as follows. Peptide chain release factor 2 directs the termination of translation in response to the peptide chain termination codons UGA and UAA. This is Peptide chain release factor 2 from Ruegeria sp. (strain TM1040) (Silicibacter sp.).